Reading from the N-terminus, the 256-residue chain is Deoxyribose-phosphate aldolase (256 aa).

D102 functions as the Proton donor/acceptor in the catalytic mechanism. Residue K165 is the Schiff-base intermediate with acetaldehyde of the active site. The active-site Proton donor/acceptor is K197.

Belongs to the DeoC/FbaB aldolase family. DeoC type 2 subfamily.

The protein resides in the cytoplasm. The catalysed reaction is 2-deoxy-D-ribose 5-phosphate = D-glyceraldehyde 3-phosphate + acetaldehyde. The protein operates within carbohydrate degradation; 2-deoxy-D-ribose 1-phosphate degradation; D-glyceraldehyde 3-phosphate and acetaldehyde from 2-deoxy-alpha-D-ribose 1-phosphate: step 2/2. In terms of biological role, catalyzes a reversible aldol reaction between acetaldehyde and D-glyceraldehyde 3-phosphate to generate 2-deoxy-D-ribose 5-phosphate. This chain is Deoxyribose-phosphate aldolase, found in Shewanella sp. (strain MR-7).